Reading from the N-terminus, the 515-residue chain is Protein disulfide-isomerase (515 aa).

Residues 1–25 (MAISKVWISLLLALAVVLSAPAARA) form the signal peptide. The region spanning 26–150 (EEAAAAEEAA…IVEYLKKQVG (125 aa)) is the Thioredoxin 1 domain. Active-site nucleophile residues include Cys68 and Cys71. Cys68 and Cys71 are oxidised to a cystine. An N-linked (GlcNAc...) asparagine glycan is attached at Asn283. Residues 346–489 (LKEQVEAGQI…IVDYIKKNKE (144 aa)) enclose the Thioredoxin 2 domain. Active-site nucleophile residues include Cys412 and Cys415. The cysteines at positions 412 and 415 are disulfide-linked. Over residues 494–509 (AAAAATEKAAEPAATE) the composition is skewed to low complexity. The disordered stretch occupies residues 494 to 515 (AAAAATEKAAEPAATEPLKDEL). Residues 512–515 (KDEL) carry the Prevents secretion from ER motif.

This sequence belongs to the protein disulfide isomerase family.

It is found in the endoplasmic reticulum lumen. The catalysed reaction is Catalyzes the rearrangement of -S-S- bonds in proteins.. Participates in the folding of proteins containing disulfide bonds, may be involved in glycosylation, prolyl hydroxylation and triglyceride transfer. The protein is Protein disulfide-isomerase (PDI) of Triticum aestivum (Wheat).